Consider the following 398-residue polypeptide: 1-deoxy-D-xylulose 5-phosphate reductoisomerase (398 aa).

NADPH-binding residues include Thr10, Gly11, Ser12, Ile13, Lys37, Asn38, and Asn124. Residue Lys125 coordinates 1-deoxy-D-xylulose 5-phosphate. An NADPH-binding site is contributed by Glu126. Asp150 serves as a coordination point for Mn(2+). 1-deoxy-D-xylulose 5-phosphate-binding residues include Ser151, Glu152, Ser186, and His209. Glu152 serves as a coordination point for Mn(2+). Residue Gly215 coordinates NADPH. 4 residues coordinate 1-deoxy-D-xylulose 5-phosphate: Ser222, Asn227, Lys228, and Glu231. Glu231 provides a ligand contact to Mn(2+).

This sequence belongs to the DXR family. Homodimer. Mg(2+) serves as cofactor. The cofactor is Mn(2+).

It carries out the reaction 2-C-methyl-D-erythritol 4-phosphate + NADP(+) = 1-deoxy-D-xylulose 5-phosphate + NADPH + H(+). It participates in isoprenoid biosynthesis; isopentenyl diphosphate biosynthesis via DXP pathway; isopentenyl diphosphate from 1-deoxy-D-xylulose 5-phosphate: step 1/6. Functionally, catalyzes the NADPH-dependent rearrangement and reduction of 1-deoxy-D-xylulose-5-phosphate (DXP) to 2-C-methyl-D-erythritol 4-phosphate (MEP). This chain is 1-deoxy-D-xylulose 5-phosphate reductoisomerase, found in Buchnera aphidicola subsp. Schizaphis graminum (strain Sg).